We begin with the raw amino-acid sequence, 63 residues long: Large ribosomal subunit protein uL30 (63 aa).

It belongs to the universal ribosomal protein uL30 family. Part of the 50S ribosomal subunit.

This is Large ribosomal subunit protein uL30 from Caulobacter sp. (strain K31).